The following is a 551-amino-acid chain: HTH-type transcriptional regulator SgrR (551 aa).

Residues 1 to 116 (MPSARLQQQF…LVSHLGRSFR (116 aa)) enclose the HTH marR-type domain. The H-T-H motif DNA-binding region spans 26–49 (LNELAALLSCSRRHMRTLLNTMQD). Residues 163 to 492 (ELEADIAHHW…IDWQADAARW (330 aa)) are solute-binding.

Its function is as follows. Activates the small RNA gene sgrS under glucose-phosphate stress conditions as well as yfdZ. Represses its own transcription under both stress and non-stress conditions. Might act as a sensor of the intracellular accumulation of phosphoglucose by binding these molecules in its C-terminal solute-binding domain. This is HTH-type transcriptional regulator SgrR from Shigella flexneri serotype 5b (strain 8401).